The chain runs to 1703 residues: Ferlin 2 (1703 aa).

2 consecutive C2 domains span residues 18-141 (IRKL…KTWL) and 207-332 (KQPV…FRWF). Disordered regions lie at residues 913-937 (NQFN…FDDN), 970-1025 (NLDK…TSST), and 1194-1228 (KNKS…QKLG). A compositionally biased stretch (acidic residues) spans 916 to 928 (NDDDEGDNEDEQD). A compositionally biased stretch (polar residues) spans 979–991 (QPQSLKNLQNLDS). Positions 993–1009 (SKADQKSQFDLKSESKS) are enriched in basic and acidic residues. Residues 1198-1209 (NRSSMSLSMRSS) show a composition bias toward low complexity. In terms of domain architecture, C2 3 spans 1466–1595 (VARIIPPSTI…LKKLKEGIVF (130 aa)). The disordered stretch occupies residues 1628–1651 (AAESDPVGEGQNEPNKDPILEKPK). Over residues 1641 to 1651 (PNKDPILEKPK) the composition is skewed to basic and acidic residues. A helical transmembrane segment spans residues 1681 to 1701 (FAGIFVSIVTMMILFVKPGIL).

It belongs to the ferlin family.

It is found in the membrane. In terms of biological role, regulates mucocyst exocytosis. The protein is Ferlin 2 of Tetrahymena thermophila (strain SB210).